An 883-amino-acid polypeptide reads, in one-letter code: Serine/threonine-protein kinase greatwall (883 aa).

Met-1 carries the N-acetylmethionine modification. Residues Met-1 to Arg-23 are disordered. The Protein kinase domain maps to Phe-35–Phe-839. Residues Ile-41–Val-49 and Lys-62 each bind ATP. The Proton acceptor role is filled by Asp-156. Residues Thr-209 and Thr-224 each carry the phosphothreonine modification. Phosphoserine is present on Ser-295. The tract at residues Arg-298–Ser-317 is disordered. Over residues Thr-301–Ser-314 the composition is skewed to low complexity. Phosphoserine occurs at positions 373 and 456. The interval Glu-511 to Pro-530 is disordered. Thr-523 bears the Phosphothreonine mark. Ser-556 and Ser-560 each carry phosphoserine. A disordered region spans residues Ile-569–Asn-597. Phosphoserine occurs at positions 635, 661, and 672. A disordered region spans residues Arg-706–Val-737. Residues Pro-710–Ser-720 show a composition bias toward polar residues. The residue at position 726 (Thr-726) is a Phosphothreonine. Ser-729 is subject to Phosphoserine. Thr-745 carries the post-translational modification Phosphothreonine; by CDK1. An AGC-kinase C-terminal domain is found at Ser-840–Leu-883. Ser-879 and Ser-882 each carry phosphoserine.

The protein belongs to the protein kinase superfamily. AGC Ser/Thr protein kinase family. Post-translationally, phosphorylation at Thr-745 by CDK1 during M phase activates its kinase activity. Maximum phosphorylation occurs in prometaphase.

The protein resides in the cytoplasm. The protein localises to the cytoskeleton. It is found in the microtubule organizing center. It localises to the centrosome. Its subcellular location is the nucleus. It carries out the reaction L-seryl-[protein] + ATP = O-phospho-L-seryl-[protein] + ADP + H(+). It catalyses the reaction L-threonyl-[protein] + ATP = O-phospho-L-threonyl-[protein] + ADP + H(+). Functionally, serine/threonine kinase that plays a key role in M phase by acting as a regulator of mitosis entry and maintenance. Acts by promoting the inactivation of protein phosphatase 2A (PP2A) during M phase: does not directly inhibit PP2A but acts by mediating phosphorylation and subsequent activation of ARPP19 and ENSA at 'Ser-62' and 'Ser-67', respectively. ARPP19 and ENSA are phosphatase inhibitors that specifically inhibit the PPP2R2D (PR55-delta) subunit of PP2A. Inactivation of PP2A during M phase is essential to keep cyclin-B1-CDK1 activity high. Following DNA damage, it is also involved in checkpoint recovery by being inhibited. This is Serine/threonine-protein kinase greatwall (MASTL) from Bos taurus (Bovine).